A 502-amino-acid polypeptide reads, in one-letter code: Maturase K (502 aa).

It belongs to the intron maturase 2 family. MatK subfamily.

Its subcellular location is the plastid. It is found in the chloroplast. Its function is as follows. Usually encoded in the trnK tRNA gene intron. Probably assists in splicing its own and other chloroplast group II introns. The polypeptide is Maturase K (Fremontodendron californicum (California flannelbush)).